Reading from the N-terminus, the 129-residue chain is RxLR effector protein PexRD43 (129 aa).

An N-terminal signal peptide occupies residues methionine 1–glycine 16. The RxLR-dEER signature appears at arginine 44 to arginine 56.

The protein belongs to the RxLR effector family.

The protein resides in the secreted. It is found in the host cytoplasm. Its subcellular location is the host nucleus. Effector that enhances P.infestans colonization of Nicotiana benthamiana leaves. The sequence is that of RxLR effector protein PexRD43 from Phytophthora infestans (strain T30-4) (Potato late blight agent).